A 593-amino-acid polypeptide reads, in one-letter code: Mitosis inducer protein kinase cdr1 (593 aa).

The Protein kinase domain maps to 12–258 (WRLGKTLGTG…IPEVFSHPFL (247 aa)). Residues 18 to 26 (LGTGSTSCV) and Lys41 each bind ATP. Asp128 functions as the Proton acceptor in the catalytic mechanism. Ser550 bears the Phosphoserine mark.

Belongs to the protein kinase superfamily. CAMK Ser/Thr protein kinase family. NIM1 subfamily. Interacts with msp1.

It carries out the reaction L-seryl-[protein] + ATP = O-phospho-L-seryl-[protein] + ADP + H(+). It catalyses the reaction L-threonyl-[protein] + ATP = O-phospho-L-threonyl-[protein] + ADP + H(+). Functionally, this protein, a dose-dependent mitotic inducer, appears to function as a negative regulator of mitosis inhibitor wee1 by phosphorylating and inactivating it. This Schizosaccharomyces pombe (strain 972 / ATCC 24843) (Fission yeast) protein is Mitosis inducer protein kinase cdr1 (cdr1).